The sequence spans 370 residues: Anhydro-N-acetylmuramic acid kinase (370 aa).

12–19 (GTSLDGVD) is an ATP binding site.

The protein belongs to the anhydro-N-acetylmuramic acid kinase family.

It carries out the reaction 1,6-anhydro-N-acetyl-beta-muramate + ATP + H2O = N-acetyl-D-muramate 6-phosphate + ADP + H(+). The protein operates within amino-sugar metabolism; 1,6-anhydro-N-acetylmuramate degradation. It functions in the pathway cell wall biogenesis; peptidoglycan recycling. Functionally, catalyzes the specific phosphorylation of 1,6-anhydro-N-acetylmuramic acid (anhMurNAc) with the simultaneous cleavage of the 1,6-anhydro ring, generating MurNAc-6-P. Is required for the utilization of anhMurNAc either imported from the medium or derived from its own cell wall murein, and thus plays a role in cell wall recycling. This chain is Anhydro-N-acetylmuramic acid kinase, found in Pectobacterium carotovorum subsp. carotovorum (strain PC1).